A 479-amino-acid polypeptide reads, in one-letter code: Long-chain acyl-protein thioester reductase (479 aa).

Belongs to the LuxC family.

The enzyme catalyses a long-chain fatty aldehyde + NADP(+) + CoA = a long-chain fatty acyl-CoA + NADPH + H(+). It functions in the pathway lipid metabolism; fatty acid reduction for biolumincescence. In terms of biological role, luxC is the fatty acid reductase enzyme responsible for synthesis of the aldehyde substrate for the luminescent reaction catalyzed by luciferase. The polypeptide is Long-chain acyl-protein thioester reductase (luxC) (Aliivibrio fischeri (Vibrio fischeri)).